The chain runs to 109 residues: MTFTKACSVDEVPPGEALQVSHDAQKVAIFNVDGEFFATQDQCTHGEWSLSEGGYLDGDVVECSLHMGKFCVRTGKVKSPPPCEPLKVYPIRIEGRDVLVDFSRAALHA.

The region spanning 4–100 (TKACSVDEVP…IRIEGRDVLV (97 aa)) is the Rieske domain. Cys-43, His-45, Cys-63, and His-66 together coordinate [2Fe-2S] cluster.

The protein belongs to the bacterial ring-hydroxylating dioxygenase ferredoxin component family. In terms of assembly, this dioxygenase system consists of four proteins: the two subunits of the hydroxylase component (BphA1 and BphA2), a ferredoxin (BphA3) and a ferredoxin reductase (BphA4).

Functionally, this protein seems to be a 2Fe-2S ferredoxin. The chain is Biphenyl dioxygenase ferredoxin subunit (bphA3) from Pseudomonas sp. (strain KKS102).